A 270-amino-acid polypeptide reads, in one-letter code: Phospholysine phosphohistidine inorganic pyrophosphate phosphatase (270 aa).

Positions 17 and 19 each coordinate Mg(2+). Substrate-binding positions include 17-19 (DIS), 54-55 (TN), and Lys189. Asp214 lines the Mg(2+) pocket.

The protein belongs to the HAD-like hydrolase superfamily. As to quaternary structure, homodimer. The cofactor is Mg(2+). Expressed in brain, and at lower levels in liver and kidney. Detected in thyroid (at protein level). Expressed in liver, kidney and moderately in brain.

Its subcellular location is the cytoplasm. The protein resides in the nucleus. It carries out the reaction diphosphate + H2O = 2 phosphate + H(+). Its function is as follows. Phosphatase that hydrolyzes imidodiphosphate, 3-phosphohistidine and 6-phospholysine. Has broad substrate specificity and can also hydrolyze inorganic diphosphate, but with lower efficiency. This Homo sapiens (Human) protein is Phospholysine phosphohistidine inorganic pyrophosphate phosphatase (LHPP).